The sequence spans 227 residues: Cytochrome c oxidase subunit 2 (227 aa).

Residues 1–14 (MAHPVQLGLQDATS) are Mitochondrial intermembrane-facing. Residues 15-45 (PVMEELVTFHDHALMAMFLISFLILYALSAT) traverse the membrane as a helical segment. Topologically, residues 46-59 (LTTKLTNTNITDAQ) are mitochondrial matrix. The chain crosses the membrane as a helical span at residues 60-87 (EMETIWTILPAVILVLIALPSLRILYMT). The Mitochondrial intermembrane segment spans residues 88–227 (DEINNPSFTI…IFEMGPVFTL (140 aa)). 6 residues coordinate Cu cation: histidine 161, cysteine 196, glutamate 198, cysteine 200, histidine 204, and methionine 207. Residue glutamate 198 coordinates Mg(2+).

Belongs to the cytochrome c oxidase subunit 2 family. As to quaternary structure, component of the cytochrome c oxidase (complex IV, CIV), a multisubunit enzyme composed of 14 subunits. The complex is composed of a catalytic core of 3 subunits MT-CO1, MT-CO2 and MT-CO3, encoded in the mitochondrial DNA, and 11 supernumerary subunits COX4I, COX5A, COX5B, COX6A, COX6B, COX6C, COX7A, COX7B, COX7C, COX8 and NDUFA4, which are encoded in the nuclear genome. The complex exists as a monomer or a dimer and forms supercomplexes (SCs) in the inner mitochondrial membrane with NADH-ubiquinone oxidoreductase (complex I, CI) and ubiquinol-cytochrome c oxidoreductase (cytochrome b-c1 complex, complex III, CIII), resulting in different assemblies (supercomplex SCI(1)III(2)IV(1) and megacomplex MCI(2)III(2)IV(2)). Found in a complex with TMEM177, COA6, COX18, COX20, SCO1 and SCO2. Interacts with TMEM177 in a COX20-dependent manner. Interacts with COX20. Interacts with COX16. Cu cation is required as a cofactor.

It localises to the mitochondrion inner membrane. It carries out the reaction 4 Fe(II)-[cytochrome c] + O2 + 8 H(+)(in) = 4 Fe(III)-[cytochrome c] + 2 H2O + 4 H(+)(out). In terms of biological role, component of the cytochrome c oxidase, the last enzyme in the mitochondrial electron transport chain which drives oxidative phosphorylation. The respiratory chain contains 3 multisubunit complexes succinate dehydrogenase (complex II, CII), ubiquinol-cytochrome c oxidoreductase (cytochrome b-c1 complex, complex III, CIII) and cytochrome c oxidase (complex IV, CIV), that cooperate to transfer electrons derived from NADH and succinate to molecular oxygen, creating an electrochemical gradient over the inner membrane that drives transmembrane transport and the ATP synthase. Cytochrome c oxidase is the component of the respiratory chain that catalyzes the reduction of oxygen to water. Electrons originating from reduced cytochrome c in the intermembrane space (IMS) are transferred via the dinuclear copper A center (CU(A)) of subunit 2 and heme A of subunit 1 to the active site in subunit 1, a binuclear center (BNC) formed by heme A3 and copper B (CU(B)). The BNC reduces molecular oxygen to 2 water molecules using 4 electrons from cytochrome c in the IMS and 4 protons from the mitochondrial matrix. The chain is Cytochrome c oxidase subunit 2 (MT-CO2) from Theropithecus gelada (Gelada baboon).